Here is a 163-residue protein sequence, read N- to C-terminus: MAKLVEKFYSIMGLGDEIEEMNDASVAPHSGEERESAFSRRSAERAERTERPTAPVVSLVTERQKKELKVVVCEPKTFDEARAIADHLKNRRQVILNLEKADREMAQRVIDFISGTTYALNGSMQKVGANIFVFAPSNVDISGEVTGDDLSSVRSPLAWANKG.

Residues 25–53 (SVAPHSGEERESAFSRRSAERAERTERPT) are disordered. The segment covering 30–51 (SGEERESAFSRRSAERAERTER) has biased composition (basic and acidic residues).

This sequence belongs to the SepF family. In terms of assembly, homodimer. Interacts with FtsZ.

It localises to the cytoplasm. Cell division protein that is part of the divisome complex and is recruited early to the Z-ring. Probably stimulates Z-ring formation, perhaps through the cross-linking of FtsZ protofilaments. Its function overlaps with FtsA. The chain is Cell division protein SepF from Heliobacterium modesticaldum (strain ATCC 51547 / Ice1).